The chain runs to 293 residues: Phosphoribosylaminoimidazole-succinocarboxamide synthase (293 aa).

Belongs to the SAICAR synthetase family.

The enzyme catalyses 5-amino-1-(5-phospho-D-ribosyl)imidazole-4-carboxylate + L-aspartate + ATP = (2S)-2-[5-amino-1-(5-phospho-beta-D-ribosyl)imidazole-4-carboxamido]succinate + ADP + phosphate + 2 H(+). Its pathway is purine metabolism; IMP biosynthesis via de novo pathway; 5-amino-1-(5-phospho-D-ribosyl)imidazole-4-carboxamide from 5-amino-1-(5-phospho-D-ribosyl)imidazole-4-carboxylate: step 1/2. This Bordetella parapertussis (strain 12822 / ATCC BAA-587 / NCTC 13253) protein is Phosphoribosylaminoimidazole-succinocarboxamide synthase.